Consider the following 424-residue polypeptide: Serine hydroxymethyltransferase 1 (424 aa).

(6S)-5,6,7,8-tetrahydrofolate-binding positions include Leu-125 and 129 to 131 (GHL). Lys-234 bears the N6-(pyridoxal phosphate)lysine mark.

The protein belongs to the SHMT family. In terms of assembly, homodimer. The cofactor is pyridoxal 5'-phosphate.

The protein localises to the cytoplasm. The catalysed reaction is (6R)-5,10-methylene-5,6,7,8-tetrahydrofolate + glycine + H2O = (6S)-5,6,7,8-tetrahydrofolate + L-serine. It participates in one-carbon metabolism; tetrahydrofolate interconversion. It functions in the pathway amino-acid biosynthesis; glycine biosynthesis; glycine from L-serine: step 1/1. Its function is as follows. Catalyzes the reversible interconversion of serine and glycine with tetrahydrofolate (THF) serving as the one-carbon carrier. This reaction serves as the major source of one-carbon groups required for the biosynthesis of purines, thymidylate, methionine, and other important biomolecules. Also exhibits THF-independent aldolase activity toward beta-hydroxyamino acids, producing glycine and aldehydes, via a retro-aldol mechanism. This is Serine hydroxymethyltransferase 1 from Burkholderia lata (strain ATCC 17760 / DSM 23089 / LMG 22485 / NCIMB 9086 / R18194 / 383).